The primary structure comprises 107 residues: Nucleoid-associated protein BAbS19_I00290 (107 aa).

The protein belongs to the YbaB/EbfC family. In terms of assembly, homodimer.

Its subcellular location is the cytoplasm. The protein resides in the nucleoid. Binds to DNA and alters its conformation. May be involved in regulation of gene expression, nucleoid organization and DNA protection. The sequence is that of Nucleoid-associated protein BAbS19_I00290 from Brucella abortus (strain S19).